Reading from the N-terminus, the 104-residue chain is Large ribosomal subunit protein uL24 (104 aa).

This sequence belongs to the universal ribosomal protein uL24 family. As to quaternary structure, part of the 50S ribosomal subunit.

Its function is as follows. One of two assembly initiator proteins, it binds directly to the 5'-end of the 23S rRNA, where it nucleates assembly of the 50S subunit. One of the proteins that surrounds the polypeptide exit tunnel on the outside of the subunit. The polypeptide is Large ribosomal subunit protein uL24 (Corynebacterium diphtheriae (strain ATCC 700971 / NCTC 13129 / Biotype gravis)).